The primary structure comprises 78 residues: Small ribosomal subunit protein bS18 (78 aa).

Belongs to the bacterial ribosomal protein bS18 family. In terms of assembly, part of the 30S ribosomal subunit. Forms a tight heterodimer with protein bS6.

Binds as a heterodimer with protein bS6 to the central domain of the 16S rRNA, where it helps stabilize the platform of the 30S subunit. This Lactobacillus acidophilus (strain ATCC 700396 / NCK56 / N2 / NCFM) protein is Small ribosomal subunit protein bS18.